The primary structure comprises 427 residues: Serine hydroxymethyltransferase (427 aa).

120–122 (GHI) is a binding site for (6S)-5,6,7,8-tetrahydrofolate. Lysine 226 carries the post-translational modification N6-(pyridoxal phosphate)lysine. Residue glutamate 243 participates in (6S)-5,6,7,8-tetrahydrofolate binding.

It belongs to the SHMT family. As to quaternary structure, homodimer. Pyridoxal 5'-phosphate serves as cofactor.

It is found in the cytoplasm. Its pathway is amino-acid biosynthesis; glycine biosynthesis; glycine from L-serine: step 1/1. Functionally, catalyzes the reversible interconversion of serine and glycine with a modified folate serving as the one-carbon carrier. Also exhibits a pteridine-independent aldolase activity toward beta-hydroxyamino acids, producing glycine and aldehydes, via a retro-aldol mechanism. The sequence is that of Serine hydroxymethyltransferase from Thermococcus gammatolerans (strain DSM 15229 / JCM 11827 / EJ3).